The chain runs to 1925 residues: Cilia- and flagella-associated protein 65 (1925 aa).

Residues 188 to 208 (FFTVIPQPIFLSPGITLTLPI) form a helical membrane-spanning segment. In terms of domain architecture, MSP spans 877 to 986 (QLKLDTHKSL…THYMLRLVGV (110 aa)). Residues 1525-1550 (SQQLMRQYHKELQEWKDEKVRQEVEF) are a coiled coil. Disordered stretches follow at residues 1645–1667 (KRKAPREESETSEEKSPNKWGPV) and 1736–1823 (SSWE…PESQ). Basic and acidic residues-rich tracts occupy residues 1649–1661 (PREESETSEEKSP) and 1739–1762 (EDGKGKQPKEDRPEHYPGLGKKEE). Acidic residues predominate over residues 1763–1804 (GEEEKGEEEEEELEEEEEEEEETEEEELGKEEIEEKEEERDE).

The protein belongs to the CFAP65 family. In terms of assembly, interacts with CFAP47.

The protein localises to the cell projection. It is found in the cilium. It localises to the flagellum membrane. The protein resides in the cytoplasmic vesicle. Its subcellular location is the secretory vesicle. The protein localises to the acrosome membrane. It is found in the cytoplasm. Its function is as follows. Plays a role in flagellar formation and sperm motility. This Homo sapiens (Human) protein is Cilia- and flagella-associated protein 65.